Reading from the N-terminus, the 75-residue chain is Cytochrome c oxidase subunit 6C (75 aa).

Residues 1–13 are Mitochondrial matrix-facing; that stretch reads MASSALAKPQMRG. A helical membrane pass occupies residues 14–54; the sequence is LLARRLRIHIVGAFVVSLGVAAFYKYAVAEPRKKAYADFYR. Residues 55 to 75 lie on the Mitochondrial intermembrane side of the membrane; that stretch reads NYDSVKYFEEMRKAGVFQSVK.

This sequence belongs to the cytochrome c oxidase subunit 6c family. Component of the cytochrome c oxidase (complex IV, CIV), a multisubunit enzyme composed of 14 subunits. The complex is composed of a catalytic core of 3 subunits MT-CO1, MT-CO2 and MT-CO3, encoded in the mitochondrial DNA, and 11 supernumerary subunits COX4I, COX5A, COX5B, COX6A, COX6B, COX6C, COX7A, COX7B, COX7C, COX8 and NDUFA4, which are encoded in the nuclear genome. The complex exists as a monomer or a dimer and forms supercomplexes (SCs) in the inner mitochondrial membrane with NADH-ubiquinone oxidoreductase (complex I, CI) and ubiquinol-cytochrome c oxidoreductase (cytochrome b-c1 complex, complex III, CIII), resulting in different assemblies (supercomplex SCI(1)III(2)IV(1) and megacomplex MCI(2)III(2)IV(2)).

It is found in the mitochondrion inner membrane. It participates in energy metabolism; oxidative phosphorylation. Its function is as follows. Component of the cytochrome c oxidase, the last enzyme in the mitochondrial electron transport chain which drives oxidative phosphorylation. The respiratory chain contains 3 multisubunit complexes succinate dehydrogenase (complex II, CII), ubiquinol-cytochrome c oxidoreductase (cytochrome b-c1 complex, complex III, CIII) and cytochrome c oxidase (complex IV, CIV), that cooperate to transfer electrons derived from NADH and succinate to molecular oxygen, creating an electrochemical gradient over the inner membrane that drives transmembrane transport and the ATP synthase. Cytochrome c oxidase is the component of the respiratory chain that catalyzes the reduction of oxygen to water. Electrons originating from reduced cytochrome c in the intermembrane space (IMS) are transferred via the dinuclear copper A center (CU(A)) of subunit 2 and heme A of subunit 1 to the active site in subunit 1, a binuclear center (BNC) formed by heme A3 and copper B (CU(B)). The BNC reduces molecular oxygen to 2 water molecules using 4 electrons from cytochrome c in the IMS and 4 protons from the mitochondrial matrix. The polypeptide is Cytochrome c oxidase subunit 6C (COX6C) (Nycticebus coucang (Slow loris)).